Reading from the N-terminus, the 122-residue chain is Acidic phospholipase A2 CTs-A3 (122 aa).

Cystine bridges form between Cys26/Cys116, Cys28/Cys44, Cys43/Cys95, Cys49/Cys122, Cys50/Cys88, Cys57/Cys81, and Cys75/Cys86. Ca(2+) is bound by residues Tyr27, Gly29, and Gly31. Residue His47 is part of the active site. Residue Asp48 participates in Ca(2+) binding. Residue Asp89 is part of the active site.

It depends on Ca(2+) as a cofactor. Expressed by the venom gland.

Its subcellular location is the secreted. It catalyses the reaction a 1,2-diacyl-sn-glycero-3-phosphocholine + H2O = a 1-acyl-sn-glycero-3-phosphocholine + a fatty acid + H(+). Snake venom phospholipase A2 (PLA2) that shows a moderate inhibition of ADP-induced human platelet aggregation when tested on platelet rich plasma. Exhibits moderate hydrolytic activities and prefers the anionic micelles (dPPC with deoxycholate) to the zwitterionic micelles (dPPC with Triton X-100). PLA2 catalyzes the calcium-dependent hydrolysis of the 2-acyl groups in 3-sn-phosphoglycerides. This is Acidic phospholipase A2 CTs-A3 from Trimeresurus stejnegeri (Chinese green tree viper).